Reading from the N-terminus, the 939-residue chain is MTIDYKKTLNLLDTSFPMRGDLARREPAMLKAWQERNLYRKIRAISQGRPKFILHDGPPYANGDIHIGHAVNKILKDIIIKSKTLSGFDAPYVPGWDCHGLPIEHQIEKKYGKHLPADQVRKLCRAFAQEQIDRQKADFMRLGVLGDWEHPYLTMNYAIEAGIIRALGKIFRNGHLYQGQKPVNWCIDCGSALAEAEVEYENKRSPAIDVGFEIIGRKDVCHPLAGVMAAEIPAGTRIFAVIWTTTPWTLPANQAVCVHPEFDYSLVSTSRGWLLLASELTNACLARYQLEGRVVATCKGLALEGLSLQHPFADRIVKVICGRHVTLEAGTGLVHTAPAHGLDDYFIGQQYGLPSDSPVKGDGKFSEQISLVGGMFVWKANDVVIDTLRSSGHLLHAEEIEHSYPHCWRHKTPIIFRATPQWFIGMQRQTAESQSFGESLRDLALRAVELTRFYPAWGRARLEAMIGNRPDWCISRQRNWGVPMTFFIHKEAHTLHPRTPELLEKVAGLVEQQGIEAWFSLDATELLGEEAQHYQKLTDTLDVWFDSGTTHETVLKQNIQLRHPADLYLEGSDQHRGWFQSSLLTGCAIDGCAPYTALLTHGFVVDGQGYKMSKSKGNVIAPQKIADTLGADILRLWVASTDYSGELSISDEILKRTVETYRRIRNTLRFLLANLADFNLAADALPPAEWVEIDRYMLAYTAALQNDLLGFYERYEFHQAVARLHHFCSEDLGGFYLDILKDRLYTSMANGIPRRSAQNALYHIVHSLVRLFAPVLSFTAEEVWQELGESAEDSVFLHTWHCFPDQSEILSDAQILIPRWQRLRELRARVLKQLEDARIQGEIGSSLAAIVEIHAAGEDFALLDSLGDDLRFVLITSEVHLQRVDDAAGEVIRVTASPHMKCERCWHYRQDVGSVPEHSSLCSRCVSNLAGSGEYRRFA.

A 'HIGH' region motif is present at residues 59–69 (PYANGDIHIGH). E570 provides a ligand contact to L-isoleucyl-5'-AMP. The 'KMSKS' region motif lies at 611–615 (KMSKS). Residue K614 coordinates ATP. The Zn(2+) site is built by C902, C905, C922, and C925.

The protein belongs to the class-I aminoacyl-tRNA synthetase family. IleS type 1 subfamily. In terms of assembly, monomer. It depends on Zn(2+) as a cofactor.

Its subcellular location is the cytoplasm. It catalyses the reaction tRNA(Ile) + L-isoleucine + ATP = L-isoleucyl-tRNA(Ile) + AMP + diphosphate. Functionally, catalyzes the attachment of isoleucine to tRNA(Ile). As IleRS can inadvertently accommodate and process structurally similar amino acids such as valine, to avoid such errors it has two additional distinct tRNA(Ile)-dependent editing activities. One activity is designated as 'pretransfer' editing and involves the hydrolysis of activated Val-AMP. The other activity is designated 'posttransfer' editing and involves deacylation of mischarged Val-tRNA(Ile). The protein is Isoleucine--tRNA ligase of Nitrosomonas europaea (strain ATCC 19718 / CIP 103999 / KCTC 2705 / NBRC 14298).